The following is a 210-amino-acid chain: MGKGDPNKPRGKMSSYAFFVQTCREEHKKKHPDSSVNFAEFSKKCSERWKTMSAKEKSKFEDLAKSDKARYDREMKNYVPPKGDKKGKKKDPNAPKRPPSAFFLFCSENRPKIKIEHPGLSIGDTAKKLGEMWSEQSAKDKQPYEQKAAKLKEKYEKDIAAYRAKGKSEAGKKGPGRPTGSKKKNEPEDEEEEEEEEEEEDDEEEEEDEE.

Residue Lys3 is modified to N6-acetyllysine. Residues 9–79 (PRGKMSSYAF…RYDREMKNYV (71 aa)) constitute a DNA-binding region (HMG box 1). Cys23 is modified (cysteine sulfonic acid (-SO3H); alternate). A disulfide bridge links Cys23 with Cys45. The residue at position 30 (Lys30) is an N6-acetyllysine. Ser35 is modified (phosphoserine). An N6-acetyllysine modification is found at Lys43. At Cys45 the chain carries Cysteine sulfonic acid (-SO3H); alternate. Residues 71–102 (YDREMKNYVPPKGDKKGKKKDPNAPKRPPSAF) form a disordered region. Lys90 carries the post-translational modification N6-acetyllysine. The segment at residues 95–163 (PKRPPSAFFL…KYEKDIAAYR (69 aa)) is a DNA-binding region (HMG box 2). Ser100 bears the Phosphoserine mark. Cys106 is subject to Cysteine sulfonic acid (-SO3H). Lys114 and Lys141 each carry N6-acetyllysine. Residues 162–172 (YRAKGKSEAGK) are compositionally biased toward basic and acidic residues. The interval 162-210 (YRAKGKSEAGKKGPGRPTGSKKKNEPEDEEEEEEEEEEEDDEEEEEDEE) is disordered. The segment at 165 to 180 (KGKSEAGKKGPGRPTG) is required for chemotactic activity. The segment covering 187–210 (PEDEEEEEEEEEEEDDEEEEEDEE) has biased composition (acidic residues).

The protein belongs to the HMGB family. Interacts with POU2F2, POU2F1 and POU3F1. Component of the RAG complex composed of core components RAG1 and RAG2, and associated component HMGB1 or HMGB2. Component of the SET complex, composed of at least ANP32A, APEX1, HMGB2, NME1, SET and TREX1. Directly interacts with SET. Interacts with LEF1. Reduction/oxidation of cysteine residues Cys-23, Cys-45 and Cys-106 and a possible intramolecular disulfide bond involving Cys-23 and Cys-45 give rise to different redox forms with specific functional activities in various cellular compartments: 1- fully reduced HMGB2 (HMGB2C23hC45hC106h), 2- disulfide HMGB2 (HMGB2C23-C45C106h) and 3- sulfonyl HMGB2 (HMGB2C23soC45soC106so). Widely expressed in embryo. In adult mainly expressed in lymphoid organs and testes. Expressed in primary spermatocytes. Expressed in the superficial zone of articular cartilage.

The protein resides in the nucleus. It localises to the chromosome. The protein localises to the cytoplasm. It is found in the secreted. Multifunctional protein with various roles in different cellular compartments. May act in a redox sensitive manner. In the nucleus is an abundant chromatin-associated non-histone protein involved in transcription, chromatin remodeling and V(D)J recombination and probably other processes. Binds DNA with a preference to non-canonical DNA structures such as single-stranded DNA. Can bent DNA and enhance DNA flexibility by looping thus providing a mechanism to promote activities on various gene promoters by enhancing transcription factor binding and/or bringing distant regulatory sequences into close proximity. Involved in V(D)J recombination by acting as a cofactor of the RAG complex: acts by stimulating cleavage and RAG protein binding at the 23 bp spacer of conserved recombination signal sequences (RSS). Proposed to be involved in the innate immune response to nucleic acids by acting as a cytoplasmic promiscuous immunogenic DNA/RNA sensor which cooperates with subsequent discriminative sensing by specific pattern recognition receptors. In the extracellular compartment acts as a chemokine. Promotes proliferation and migration of endothelial cells implicating AGER/RAGE. Has antimicrobial activity in gastrointestinal epithelial tissues. Involved in inflammatory response to antigenic stimulus coupled with pro-inflammatory activity. May play a role in germ cell differentiation. Involved in modulation of neurogenesis probably by regulation of neural stem proliferation. Involved in articular cartilage surface maintenance implicating LEF1 and the Wnt/beta-catenin pathway. The chain is High mobility group protein B2 (Hmgb2) from Mus musculus (Mouse).